Reading from the N-terminus, the 98-residue chain is Large ribosomal subunit protein uL23 (98 aa).

This sequence belongs to the universal ribosomal protein uL23 family. Part of the 50S ribosomal subunit. Contacts protein L29, and trigger factor when it is bound to the ribosome.

One of the early assembly proteins it binds 23S rRNA. One of the proteins that surrounds the polypeptide exit tunnel on the outside of the ribosome. Forms the main docking site for trigger factor binding to the ribosome. The protein is Large ribosomal subunit protein uL23 of Clostridium acetobutylicum (strain ATCC 824 / DSM 792 / JCM 1419 / IAM 19013 / LMG 5710 / NBRC 13948 / NRRL B-527 / VKM B-1787 / 2291 / W).